Consider the following 732-residue polypeptide: Protein kinase YpkA (732 aa).

Residues 136-408 (VAETDKFAEG…SNEARLHEFL (273 aa)) enclose the Protein kinase domain. Residues 142–150 (FAEGESHIS) and K163 contribute to the ATP site. D270 functions as the Proton acceptor in the catalytic mechanism.

The protein belongs to the protein kinase superfamily. Ser/Thr protein kinase family.

The protein localises to the secreted. It catalyses the reaction L-seryl-[protein] + ATP = O-phospho-L-seryl-[protein] + ADP + H(+). The enzyme catalyses L-threonyl-[protein] + ATP = O-phospho-L-threonyl-[protein] + ADP + H(+). Functionally, acts as a virulence determinant. This is Protein kinase YpkA (ypkA) from Yersinia pestis.